Consider the following 295-residue polypeptide: Cytidine deaminase (295 aa).

CMP/dCMP-type deaminase domains are found at residues 48–168 and 187–295; these read ADDE…FGPA and EETT…YLAI. Substrate is bound at residue 89 to 91; sequence NLE. Zn(2+) is bound at residue histidine 102. The Proton donor role is filled by glutamate 104. Zn(2+) is bound by residues cysteine 129 and cysteine 132.

This sequence belongs to the cytidine and deoxycytidylate deaminase family. As to quaternary structure, homodimer. It depends on Zn(2+) as a cofactor.

It carries out the reaction cytidine + H2O + H(+) = uridine + NH4(+). The enzyme catalyses 2'-deoxycytidine + H2O + H(+) = 2'-deoxyuridine + NH4(+). Functionally, this enzyme scavenges exogenous and endogenous cytidine and 2'-deoxycytidine for UMP synthesis. The protein is Cytidine deaminase of Vibrio atlanticus (strain LGP32) (Vibrio splendidus (strain Mel32)).